The chain runs to 384 residues: MQTIDVLIVGGGVIGTSCAYELSQYKLKVALLEKNAFLGCETSQANSGVIHSGIDPNPNKLTAKYNILGRKIWIEDWFKKLIFPRKKIATLIVAFNNEEKLQLNLLKERGIKNSIPVENIQILDQQQTLLQEPFINPNVVASLKVEGSWLIDPLIATKCLALASLQNNVAIYSNKKVTKIEIDSDDDFLVFINNETTPQFKTKKLIDAAGHYADWLAETTQVDNFKQTTRKGQYLVLKNQNNLKINTIIFMVPTIHGKGVVVAEMLDGNILVGPNAVEGIEKNKTRSIDLDSINQIKTIGKKMVPSLQFENSIYSFAGSRAIDIETNDFVIRTAKSNPNFIILGGMKSPGLTSSPAIAKRAVELLNLKLKKKINWNPNYNLSWI.

Residues 1 to 17 (MQTIDVLIVGGGVIGTS) form the signal peptide. An FAD-binding site is contributed by Ile14. A lipid anchor (N-palmitoyl cysteine) is attached at Cys18. Residue Cys18 is the site of S-diacylglycerol cysteine attachment. FAD-binding positions include Glu33, 42–43 (TS), and 47–49 (SGV). Sn-glycerol 3-phosphate is bound by residues Ser47 and His51. The active-site Proton acceptor is the His51. Residue Val177 participates in FAD binding. Sn-glycerol 3-phosphate contacts are provided by Lys258 and Arg320. Residue 346 to 347 (MK) coordinates FAD. Ser348 contributes to the sn-glycerol 3-phosphate binding site. Thr352 lines the FAD pocket.

As to quaternary structure, monomer. FAD serves as cofactor.

The protein localises to the cytoplasm. It is found in the cell membrane. The catalysed reaction is sn-glycerol 3-phosphate + O2 = dihydroxyacetone phosphate + H2O2. It participates in polyol metabolism; glycerol degradation via glycerol kinase pathway; glycerone phosphate from sn-glycerol 3-phosphate (aerobic route): step 1/1. Functionally, catalyzes the oxidation of glycerol 3-phosphate to dihydroxyacetone phosphate (DHAP), with a reduction of O2 to H2O2. The formation of hydrogen peroxide by this enzyme is crucial for cytotoxic effects on host cells. Does not show any dehydrogenase activity with NAD(+). This chain is Glycerol 3-phosphate oxidase, found in Mycoplasma genitalium (strain ATCC 33530 / DSM 19775 / NCTC 10195 / G37) (Mycoplasmoides genitalium).